Here is a 476-residue protein sequence, read N- to C-terminus: G-patch domain and KOW motifs-containing protein (476 aa).

The interval M1–L96 is disordered. N-acetylalanine is present on A2. K5 is covalently cross-linked (Glycyl lysine isopeptide (Lys-Gly) (interchain with G-Cter in SUMO2)). The span at A13–T26 shows a compositional bias: polar residues. S27 is subject to Phosphoserine; by PKA. Residues S35 and S42 each carry the phosphoserine modification. The segment covering P43–Q58 has biased composition (basic and acidic residues). Residue S115 is modified to Phosphoserine. In terms of domain architecture, G-patch spans V164–T210. The segment at L203–G244 is disordered. Polar residues predominate over residues T210–G219. The residue at position 216 (T216) is a Phosphothreonine. Over residues P224 to Q237 the composition is skewed to basic and acidic residues. A KOW 1 domain is found at G240–D267. At T316 the chain carries Phosphothreonine; by PKA. Residues D327–R353 form a disordered region. Residues P337 to A351 are compositionally biased toward basic and acidic residues. The region spanning P415–A442 is the KOW 2 domain. The residue at position 471 (S471) is a Phosphoserine. The residue at position 473 (T473) is a Phosphothreonine.

It belongs to the MOS2 family. Component of the minor spliceosome, which splices U12-type introns. Interacts with PRKX. Interacts with DHX16. Interacts with PRKACB. Phosphorylation regulates its ability to bind RNA.

Its subcellular location is the nucleus. RNA-binding protein involved in pre-mRNA splicing. As a component of the minor spliceosome, involved in the splicing of U12-type introns in pre-mRNAs. The polypeptide is G-patch domain and KOW motifs-containing protein (GPKOW) (Homo sapiens (Human)).